Consider the following 94-residue polypeptide: Scorpine (94 aa).

The first 19 residues, 1 to 19, serve as a signal peptide directing secretion; sequence MNSKLTALIFLGLIAIAYC. One can recognise a BetaSPN-type CS-alpha/beta domain in the interval 55-94; that stretch reads EFQCMANMDMLGNCEKHCQTSGEKGYCHGTKCKCGTPLSY. 3 cysteine pairs are disulfide-bonded: cysteine 58–cysteine 81, cysteine 68–cysteine 86, and cysteine 72–cysteine 88.

This sequence belongs to the long chain scorpion toxin family. Class 3 subfamily. As to expression, expressed by the venom gland.

It is found in the secreted. Its subcellular location is the target cell membrane. This full-length protein shows antibacterial activity against B.subtilis and K.pneumoniae. Also shows a potent inhibitory effect on the ookinete (ED(50) 0.7 uM) and gamete (ED(50) 10 uM) stages of Plasmodium berghei development. In addition, induces cell membrane disruption, leakage currents and cell death on HEK293 cell line (tested at 25 uM). This is Scorpine from Pandinus imperator (Emperor scorpion).